The primary structure comprises 368 residues: DNA-directed RNA polymerase II subunit GRINL1A (368 aa).

An important for transcription repressor activity region spans residues 29–68; sequence KRQERLLRNEKFICKLPDKGKKIFDSFAKLKAAIAECEEV. 3 stretches are compositionally biased toward polar residues: residues 116–131, 205–224, and 258–273; these read SSVD…QNQG, GEQQ…LSSG, and QNDS…SPIS. 3 disordered regions span residues 116–186, 203–227, and 255–282; these read SSVD…DTSS, DQGE…GTEK, and PFRQ…RRDK. The interval 227 to 298 is interaction with Pol II; the sequence is KKPHYMEVLE…TAARLLPLHH (72 aa). Serine 270 bears the Phosphoserine mark. The tract at residues 299-314 is important for transcription repressor activity; that stretch reads MPTQLLSIEESLALQK. Residues 301 to 335 are a coiled coil; sequence TQLLSIEESLALQKQQKQNYEEMQAKLAAQKLAER. Residues 315 to 340 form an interaction with Pol II region; the sequence is QQKQNYEEMQAKLAAQKLAERLNIKM. Positions 339–368 are disordered; it reads KMRSYNPEGESSGRYREVRDEDDDWSSDEF. The segment covering 358–368 has biased composition (acidic residues); the sequence is DEDDDWSSDEF.

It belongs to the GRINL1 family. Component of the Pol II(G) complex, which contains the RNA polymerase II (Pol II) core complex subunits and POLR2M isoform 1. Pol II(G) appears to be an abundant form of Pol II. Post-translationally, dephosphorylated at Ser-270 by the PNUTS-PP1 complex, promoting RNA polymerase II transcription pause-release. Detected in adult an fetal brain. Detected in heart, kidney, skeletal muscle, small intestine, lung, prostate and testis.

The protein resides in the nucleus. In terms of biological role, appears to be a stable component of the Pol II(G) complex form of RNA polymerase II (Pol II). Pol II synthesizes mRNA precursors and many functional non-coding RNAs and is the central component of the basal RNA polymerase II transcription machinery. May play a role in the Mediator complex-dependent regulation of transcription activation. Acts as a negative regulator of transcriptional activation; this repression is relieved by the Mediator complex, which restores Pol II(G) activator-dependent transcription to a level equivalent to that of Pol II. This Homo sapiens (Human) protein is DNA-directed RNA polymerase II subunit GRINL1A (POLR2M).